The sequence spans 363 residues: DNA repair protein rlp1 (363 aa).

Belongs to the RecA family. RAD51 subfamily. As to quaternary structure, interacts with rdl1 and sws1.

Its subcellular location is the cytoplasm. It localises to the nucleus. Functionally, required for normal levels of meiotic recombination. Acts in the recombinational pathway of double-strand break (DSB) repair together with rhp51, rhp55 and rad22. Required for the full extent of DNA recombination and cell survival under condition of a replication fork collapse. This Schizosaccharomyces pombe (strain 972 / ATCC 24843) (Fission yeast) protein is DNA repair protein rlp1.